We begin with the raw amino-acid sequence, 161 residues long: Nucleotide-binding protein lpg1167 (161 aa).

Belongs to the YajQ family.

Its function is as follows. Nucleotide-binding protein. The chain is Nucleotide-binding protein lpg1167 from Legionella pneumophila subsp. pneumophila (strain Philadelphia 1 / ATCC 33152 / DSM 7513).